The following is a 206-amino-acid chain: Ectodysplasin-A receptor-associated adapter protein (206 aa).

Disordered stretches follow at residues M1–P36 and T52–P77. Polar residues-rich tracts occupy residues P24 to D33 and T52 to K62. One can recognise a Death domain in the interval D114–V190.

In terms of assembly, self-associates and binds to EDAR, TRAF1, TRAF2 and TRAF3.

The protein resides in the cytoplasm. In terms of biological role, adapter protein that interacts with EDAR DEATH domain and couples the receptor to EDA signaling pathway during morphogenesis of ectodermal organs. Mediates the activation of NF-kappa-B. This Macaca fascicularis (Crab-eating macaque) protein is Ectodysplasin-A receptor-associated adapter protein (EDARADD).